Here is a 180-residue protein sequence, read N- to C-terminus: Trafficking protein particle complex subunit 3 (180 aa).

Cysteine 68 carries S-palmitoyl cysteine lipidation.

It belongs to the TRAPP small subunits family. BET3 subfamily. As to quaternary structure, homodimer. Component of the multisubunit transport protein particle (TRAPP) complex, which includes at least TRAPPC2, TRAPPC2L, TRAPPC3, TRAPPC3L, TRAPPC4, TRAPPC5, TRAPPC8, TRAPPC9, TRAPPC10, TRAPPC11 and TRAPPC12. Heterodimer with TRAPPC6A. The heterodimer TRAPPC3-TRAPPC6A interacts with TRAPPC2L. Heterodimer with TRAPPC6b. The heterodimer TRAPPC6B-TRAPPC3 interacts with TRAPPC1 likely providing a core for TRAPP complex formation. In terms of tissue distribution, widely expressed. Expressed in lung, heart, liver, spleen, brain and kidney.

It localises to the golgi apparatus. It is found in the cis-Golgi network. The protein localises to the endoplasmic reticulum. Its function is as follows. May play a role in vesicular transport from endoplasmic reticulum to Golgi. This is Trafficking protein particle complex subunit 3 from Mus musculus (Mouse).